The chain runs to 354 residues: Large ribosomal subunit protein uL10 (354 aa).

2 stretches are compositionally biased toward acidic residues: residues 286 to 296 (DEEALPEELQD) and 307 to 345 (AEADDEDDTGNVEQTDESDADDADDADDADDADEEDGDG). Residues 286–354 (DEEALPEELQ…GGDALGDMFG (69 aa)) form a disordered region.

The protein belongs to the universal ribosomal protein uL10 family. Part of the 50S ribosomal subunit. Forms part of the ribosomal stalk which helps the ribosome interact with GTP-bound translation factors. Forms a heptameric L10(L12)2(L12)2(L12)2 complex, where L10 forms an elongated spine to which the L12 dimers bind in a sequential fashion.

Functionally, forms part of the ribosomal stalk, playing a central role in the interaction of the ribosome with GTP-bound translation factors. This Natronomonas pharaonis (strain ATCC 35678 / DSM 2160 / CIP 103997 / JCM 8858 / NBRC 14720 / NCIMB 2260 / Gabara) (Halobacterium pharaonis) protein is Large ribosomal subunit protein uL10.